Reading from the N-terminus, the 448-residue chain is Chromosomal replication initiator protein DnaA (448 aa).

The domain I, interacts with DnaA modulators stretch occupies residues 1 to 73 (MSTHLTETWE…VNALKLLTSK (73 aa)). The segment at 73-109 (KKYNIDFIVTTEEKIEENEKNHNNEKSNIVVNDEMST) is domain II. Positions 110–326 (MLNPKYTFDS…GALIRIVAFS (217 aa)) are domain III, AAA+ region. Residues G154, G156, K157, and T158 each contribute to the ATP site. The tract at residues 327 to 448 (SLTNKEISVD…NELNKRINQK (122 aa)) is domain IV, binds dsDNA.

Belongs to the DnaA family. Oligomerizes as a right-handed, spiral filament on DNA at oriC.

Its subcellular location is the cytoplasm. In terms of biological role, plays an essential role in the initiation and regulation of chromosomal replication. ATP-DnaA binds to the origin of replication (oriC) to initiate formation of the DNA replication initiation complex once per cell cycle. Binds the DnaA box (a 9 base pair repeat at the origin) and separates the double-stranded (ds)DNA. Forms a right-handed helical filament on oriC DNA; dsDNA binds to the exterior of the filament while single-stranded (ss)DNA is stabiized in the filament's interior. The ATP-DnaA-oriC complex binds and stabilizes one strand of the AT-rich DNA unwinding element (DUE), permitting loading of DNA polymerase. After initiation quickly degrades to an ADP-DnaA complex that is not apt for DNA replication. Binds acidic phospholipids. The polypeptide is Chromosomal replication initiator protein DnaA (Clostridium botulinum (strain 657 / Type Ba4)).